Reading from the N-terminus, the 4485-residue chain is Dynein gamma chain, flagellar outer arm (4485 aa).

Residues 1–1780 form a stem region; sequence MALDNRHRLI…IISICDVDFE (1780 aa). Coiled-coil stretches lie at residues 449–469, 804–838, 1093–1114, 1275–1297, and 1699–1727; these read IEGL…VKRK, VEQN…VRNY, VRNV…DNLI, DVVE…SKKL, and KKVD…NLET. 4 AAA regions span residues 1781-2002, 2061-2279, 2384-2638, and 2763-3013; these read YSFE…VLRT, KDAE…ISLK, TYPK…VFQG, and KFNE…YRRY. ATP is bound by residues 1819 to 1826, 2099 to 2106, 2425 to 2432, and 2802 to 2809; these read GPAGTGKT, GPSGSGKS, GGPGTAKT, and GVGGSGKQ. Coiled-coil stretches lie at residues 3077-3099, 3196-3227, 3265-3343, and 3569-3663; these read AKEA…KEKQ, EAQK…ELLE, KVVE…LAGE, and EDQL…EEYR. Residues 3077–3343 are stalk; the sequence is AKEAEALLKQ…NALIGALAGE (267 aa). AAA regions lie at residues 3412 to 3643 and 3857 to 4071; these read LVDD…DVSE and AADY…FLQN.

It belongs to the dynein heavy chain family. As to quaternary structure, consists of at least 3 heavy chains (alpha, beta and gamma), 2 intermediate chains and 8 light chains.

The protein resides in the cell projection. It localises to the cilium. It is found in the flagellum. The protein localises to the cytoplasm. Its subcellular location is the cytoskeleton. The protein resides in the flagellum axoneme. Functionally, force generating protein of eukaryotic cilia and flagella. Produces force towards the minus ends of microtubules. Dynein has ATPase activity; the force-producing power stroke is thought to occur on release of ADP. The sequence is that of Dynein gamma chain, flagellar outer arm (ODA2) from Chlamydomonas reinhardtii (Chlamydomonas smithii).